The chain runs to 256 residues: POU domain class 2-associating factor 1 (256 aa).

Residues 1–24 (MLWQKSTAPEQAPAPPRPYQGVRV) form a disordered region. An OCA domain is found at 16–38 (PRPYQGVRVKEPVKELLRRKRGH).

Belongs to the POU2AF family. In terms of assembly, interacts with POU2F1/OCT1 and POU2F2/OCT2; the interaction increases POU2F1 and POU2F2 transactivation activity. In terms of processing, ubiquitinated; mediated by SIAH1 or SIAH2 and leading to its subsequent proteasomal degradation. B-cell specific.

It localises to the nucleus. Functionally, transcriptional coactivator that specifically associates with either POU2F1/OCT1 or POU2F2/OCT2. It boosts the POU2F1/OCT1 mediated promoter activity and to a lesser extent, that of POU2F2/OCT2. It recognizes the POU domains of POU2F1/OCT1 and POU2F2/OCT2. It is essential for the response of B-cells to antigens and required for the formation of germinal centers. Regulates IL6 expression in B cells as POU2F2/OCT2 coactivator. This is POU domain class 2-associating factor 1 from Mus musculus (Mouse).